Consider the following 150-residue polypeptide: 1,4-dihydroxy-2-naphthoyl-CoA hydrolase (150 aa).

D22 is an active-site residue.

Belongs to the 4-hydroxybenzoyl-CoA thioesterase family. DHNA-CoA hydrolase subfamily.

It catalyses the reaction 1,4-dihydroxy-2-naphthoyl-CoA + H2O = 1,4-dihydroxy-2-naphthoate + CoA + H(+). The protein operates within cofactor biosynthesis; phylloquinone biosynthesis. Its pathway is quinol/quinone metabolism; 1,4-dihydroxy-2-naphthoate biosynthesis; 1,4-dihydroxy-2-naphthoate from chorismate: step 7/7. Functionally, catalyzes the hydrolysis of 1,4-dihydroxy-2-naphthoyl-CoA (DHNA-CoA) to 1,4-dihydroxy-2-naphthoate (DHNA), a reaction involved in phylloquinone (vitamin K1) biosynthesis. The sequence is that of 1,4-dihydroxy-2-naphthoyl-CoA hydrolase from Prochlorococcus marinus (strain NATL1A).